We begin with the raw amino-acid sequence, 157 residues long: Ribosome-binding factor A (157 aa).

Residues 124–157 (SAGAQFAGDADPYRKPESDDESDTAAKTDGDAAE) are disordered. The span at 147-157 (TAAKTDGDAAE) shows a compositional bias: basic and acidic residues.

It belongs to the RbfA family. In terms of assembly, monomer. Binds 30S ribosomal subunits, but not 50S ribosomal subunits or 70S ribosomes.

It is found in the cytoplasm. In terms of biological role, one of several proteins that assist in the late maturation steps of the functional core of the 30S ribosomal subunit. Associates with free 30S ribosomal subunits (but not with 30S subunits that are part of 70S ribosomes or polysomes). Required for efficient processing of 16S rRNA. May interact with the 5'-terminal helix region of 16S rRNA. This is Ribosome-binding factor A from Streptomyces avermitilis (strain ATCC 31267 / DSM 46492 / JCM 5070 / NBRC 14893 / NCIMB 12804 / NRRL 8165 / MA-4680).